The sequence spans 171 residues: Lipoprotein signal peptidase (171 aa).

3 helical membrane-spanning segments follow: residues 7–27 (GLLALVLTLILDQATKLGLYF), 64–84 (IGRWLLVALSLAAAIGLGLWM), and 88–108 (TSRLLGIALGLIVGGALGNAI). Active-site residues include D118 and D136. The chain crosses the membrane as a helical span at residues 128 to 148 (SWYVFNVADAAIVAGVIGLIL).

It belongs to the peptidase A8 family.

It localises to the cell inner membrane. The enzyme catalyses Release of signal peptides from bacterial membrane prolipoproteins. Hydrolyzes -Xaa-Yaa-Zaa-|-(S,diacylglyceryl)Cys-, in which Xaa is hydrophobic (preferably Leu), and Yaa (Ala or Ser) and Zaa (Gly or Ala) have small, neutral side chains.. Its pathway is protein modification; lipoprotein biosynthesis (signal peptide cleavage). This protein specifically catalyzes the removal of signal peptides from prolipoproteins. The protein is Lipoprotein signal peptidase of Methylobacterium radiotolerans (strain ATCC 27329 / DSM 1819 / JCM 2831 / NBRC 15690 / NCIMB 10815 / 0-1).